Here is an 81-residue protein sequence, read N- to C-terminus: MSAKGQLLQDPFLNTLRKEHIPVSIYLVNGIKLQGHIDSFDQYVVLLKNTVTQMVYKHAISTVVPARAVNIPFEAPPISDA.

Positions 10–69 constitute a Sm domain; the sequence is DPFLNTLRKEHIPVSIYLVNGIKLQGHIDSFDQYVVLLKNTVTQMVYKHAISTVVPARAV.

Belongs to the Hfq family. In terms of assembly, homohexamer.

Functionally, RNA chaperone that binds small regulatory RNA (sRNAs) and mRNAs to facilitate mRNA translational regulation in response to envelope stress, environmental stress and changes in metabolite concentrations. Also binds with high specificity to tRNAs. In Nitrosospira multiformis (strain ATCC 25196 / NCIMB 11849 / C 71), this protein is RNA-binding protein Hfq.